The chain runs to 163 residues: NADH-quinone oxidoreductase subunit I (163 aa).

4Fe-4S ferredoxin-type domains lie at 54–84 and 94–123; these read LRRY…IESD and TRYD…ETQI. 8 residues coordinate [4Fe-4S] cluster: cysteine 64, cysteine 67, cysteine 70, cysteine 74, cysteine 103, cysteine 106, cysteine 109, and cysteine 113.

Belongs to the complex I 23 kDa subunit family. NDH-1 is composed of 14 different subunits. Subunits NuoA, H, J, K, L, M, N constitute the membrane sector of the complex. Requires [4Fe-4S] cluster as cofactor.

The protein localises to the cell inner membrane. It carries out the reaction a quinone + NADH + 5 H(+)(in) = a quinol + NAD(+) + 4 H(+)(out). NDH-1 shuttles electrons from NADH, via FMN and iron-sulfur (Fe-S) centers, to quinones in the respiratory chain. The immediate electron acceptor for the enzyme in this species is believed to be ubiquinone. Couples the redox reaction to proton translocation (for every two electrons transferred, four hydrogen ions are translocated across the cytoplasmic membrane), and thus conserves the redox energy in a proton gradient. In Cupriavidus necator (strain ATCC 17699 / DSM 428 / KCTC 22496 / NCIMB 10442 / H16 / Stanier 337) (Ralstonia eutropha), this protein is NADH-quinone oxidoreductase subunit I.